The primary structure comprises 168 residues: Chorismate pyruvate-lyase (168 aa).

Substrate is bound by residues Met36, Arg78, Leu116, and Glu157.

This sequence belongs to the UbiC family. As to quaternary structure, monomer.

It localises to the cytoplasm. It catalyses the reaction chorismate = 4-hydroxybenzoate + pyruvate. Its pathway is cofactor biosynthesis; ubiquinone biosynthesis. Functionally, removes the pyruvyl group from chorismate, with concomitant aromatization of the ring, to provide 4-hydroxybenzoate (4HB) for the ubiquinone pathway. The protein is Chorismate pyruvate-lyase of Yersinia enterocolitica serotype O:8 / biotype 1B (strain NCTC 13174 / 8081).